The chain runs to 277 residues: RNA-binding protein pno-1 (277 aa).

2 disordered regions span residues 1–52 (MATS…KLVK) and 72–100 (DEDA…GESR). Positions 8 to 27 (FDDELPMEEGMPELLDDEDV) are enriched in acidic residues. Positions 30 to 40 (TLPSLLEQNLD) are enriched in polar residues. Positions 72-81 (DEDATADTAD) are enriched in acidic residues. A KH domain is found at 198-250 (GDHVSRAIGRIAGKDGRTKLVIENTTKTRIVVANTKIHILGAYQNLKLARNAV).

This sequence belongs to the PNO1 family. Part of the small subunit (SSU) processome, composed of more than 70 proteins and the RNA chaperone small nucleolar RNA (snoRNA) U3.

Its subcellular location is the nucleus. It localises to the nucleolus. Part of the small subunit (SSU) processome, first precursor of the small eukaryotic ribosomal subunit. During the assembly of the SSU processome in the nucleolus, many ribosome biogenesis factors, an RNA chaperone and ribosomal proteins associate with the nascent pre-rRNA and work in concert to generate RNA folding, modifications, rearrangements and cleavage as well as targeted degradation of pre-ribosomal RNA by the RNA exosome. Positively regulates dimethylation of two adjacent adenosines in the loop of a conserved hairpin near the 3'-end of 18S rRNA. This Caenorhabditis elegans protein is RNA-binding protein pno-1.